Consider the following 188-residue polypeptide: Probable chemoreceptor glutamine deamidase CheD (188 aa).

This sequence belongs to the CheD family.

It carries out the reaction L-glutaminyl-[protein] + H2O = L-glutamyl-[protein] + NH4(+). Probably deamidates glutamine residues to glutamate on methyl-accepting chemotaxis receptors (MCPs), playing an important role in chemotaxis. The protein is Probable chemoreceptor glutamine deamidase CheD of Caulobacter sp. (strain K31).